We begin with the raw amino-acid sequence, 226 residues long: 7-cyano-7-deazaguanine synthase (226 aa).

An ATP-binding site is contributed by Leu-9 to Leu-19. Residues Cys-189, Cys-199, Cys-202, and Cys-205 each contribute to the Zn(2+) site.

The protein belongs to the QueC family. Zn(2+) serves as cofactor.

It carries out the reaction 7-carboxy-7-deazaguanine + NH4(+) + ATP = 7-cyano-7-deazaguanine + ADP + phosphate + H2O + H(+). It functions in the pathway purine metabolism; 7-cyano-7-deazaguanine biosynthesis. Its function is as follows. Catalyzes the ATP-dependent conversion of 7-carboxy-7-deazaguanine (CDG) to 7-cyano-7-deazaguanine (preQ(0)). In Cupriavidus pinatubonensis (strain JMP 134 / LMG 1197) (Cupriavidus necator (strain JMP 134)), this protein is 7-cyano-7-deazaguanine synthase.